The sequence spans 219 residues: MTRKIFESDLEELHSELLRMGSMAEKQIYDCMEALEKQDENMAEVIIKKDDIIDDMQKEIENKVIRLIAMQQPIVAEDLRNIFTTVKIVTDLERLGDHAVDIAKAIKRLNGEKHHDIVKEIWNMGNKVKSMIKDSLDAYVERNLDKAYEVCKRDDDVDSLYKRIFNELLNIMSEDKSKVNQLTQFLFVCKYLERIGDRTTNVCESTIYLITGKQVDLND.

It belongs to the PhoU family. As to quaternary structure, homodimer.

It localises to the cytoplasm. Functionally, plays a role in the regulation of phosphate uptake. Encoded together with proteins of the phosphate-specific transport (Pst) system in the polycistronic pstSCAB-phoU operon. This is Phosphate-specific transport system accessory protein PhoU homolog from Clostridium acetobutylicum (strain ATCC 824 / DSM 792 / JCM 1419 / IAM 19013 / LMG 5710 / NBRC 13948 / NRRL B-527 / VKM B-1787 / 2291 / W).